A 359-amino-acid polypeptide reads, in one-letter code: MAIRVLIMAGGTGGHIFPALAVADRLRAWGVEVVWMGTRHGLEAELVPKAGYPIEWISIGGLRGKGLTHWLRAPFKLLLALSQALRALRRWQPAVVLGLGGFVSGPGGLGAWLLRRPLLIHEQNAIVGTANRLLAPLAGRVMEAFPGTFPPARKAEWTGNPVRESIEQLSESRARLQARQGCFHLLVLGGSQGARILNETVPQALALLPTKVRPQVWHQCGSRQWEGAVVAYRAAGVEARLVPFIDDMAAAYAWADLVVCRAGALTVAELMAAGIGALLVPFPLAIDDHQRANADYLVVAGAALLLPEKELSPSRLAQEIERLGADYSTFISMAQAARQLHRVGAAQRVAERCLEVASG.

Residues 12 to 14 (TGG), Asn-124, Arg-163, Ser-191, Ile-245, 264 to 269 (ALTVAE), and Gln-290 each bind UDP-N-acetyl-alpha-D-glucosamine.

It belongs to the glycosyltransferase 28 family. MurG subfamily.

Its subcellular location is the cell inner membrane. The enzyme catalyses di-trans,octa-cis-undecaprenyl diphospho-N-acetyl-alpha-D-muramoyl-L-alanyl-D-glutamyl-meso-2,6-diaminopimeloyl-D-alanyl-D-alanine + UDP-N-acetyl-alpha-D-glucosamine = di-trans,octa-cis-undecaprenyl diphospho-[N-acetyl-alpha-D-glucosaminyl-(1-&gt;4)]-N-acetyl-alpha-D-muramoyl-L-alanyl-D-glutamyl-meso-2,6-diaminopimeloyl-D-alanyl-D-alanine + UDP + H(+). It functions in the pathway cell wall biogenesis; peptidoglycan biosynthesis. In terms of biological role, cell wall formation. Catalyzes the transfer of a GlcNAc subunit on undecaprenyl-pyrophosphoryl-MurNAc-pentapeptide (lipid intermediate I) to form undecaprenyl-pyrophosphoryl-MurNAc-(pentapeptide)GlcNAc (lipid intermediate II). The polypeptide is UDP-N-acetylglucosamine--N-acetylmuramyl-(pentapeptide) pyrophosphoryl-undecaprenol N-acetylglucosamine transferase (Nitrosococcus oceani (strain ATCC 19707 / BCRC 17464 / JCM 30415 / NCIMB 11848 / C-107)).